A 659-amino-acid polypeptide reads, in one-letter code: Ion-translocating oxidoreductase complex subunit C (659 aa).

4Fe-4S ferredoxin-type domains are found at residues 366–397 (TEMGLSEPEQSCIRCGLCVDACPAGLLPQQLY) and 407–436 (KARNHNLFDCIECGACAYVCPSNIPLVQYY). Residues Cys377, Cys380, Cys383, Cys387, Cys416, Cys419, Cys422, and Cys426 each contribute to the [4Fe-4S] cluster site.

It belongs to the 4Fe4S bacterial-type ferredoxin family. RnfC subfamily. The complex is composed of six subunits: RnfA, RnfB, RnfC, RnfD, RnfE and RnfG. The cofactor is [4Fe-4S] cluster.

It localises to the cell inner membrane. Part of a membrane-bound complex that couples electron transfer with translocation of ions across the membrane. This is Ion-translocating oxidoreductase complex subunit C from Yersinia pseudotuberculosis serotype IB (strain PB1/+).